A 547-amino-acid polypeptide reads, in one-letter code: Probable bifunctional tRNA threonylcarbamoyladenosine biosynthesis protein (547 aa).

Residues methionine 1–tryptophan 329 form a kae1 region. 3 residues coordinate Fe cation: histidine 112, histidine 116, and tyrosine 133. Residues tyrosine 133 to glycine 137, aspartate 165, glycine 178, glutamate 182, and asparagine 262 each bind L-threonylcarbamoyladenylate. Aspartate 290 contacts Fe cation. The Protein kinase domain maps to isoleucine 346–leucine 547. ATP contacts are provided by residues isoleucine 352 to isoleucine 360 and lysine 373. Catalysis depends on aspartate 465, which acts as the Proton acceptor; for kinase activity.

This sequence in the N-terminal section; belongs to the KAE1 / TsaD family. The protein in the C-terminal section; belongs to the protein kinase superfamily. Tyr protein kinase family. BUD32 subfamily. Component of the KEOPS complex that consists of Kae1, Bud32, Cgi121 and Pcc1; the whole complex dimerizes. The cofactor is Fe(2+).

It is found in the cytoplasm. The catalysed reaction is L-seryl-[protein] + ATP = O-phospho-L-seryl-[protein] + ADP + H(+). The enzyme catalyses L-threonyl-[protein] + ATP = O-phospho-L-threonyl-[protein] + ADP + H(+). It carries out the reaction L-threonylcarbamoyladenylate + adenosine(37) in tRNA = N(6)-L-threonylcarbamoyladenosine(37) in tRNA + AMP + H(+). In terms of biological role, required for the formation of a threonylcarbamoyl group on adenosine at position 37 (t(6)A37) in tRNAs that read codons beginning with adenine. Is a component of the KEOPS complex that is probably involved in the transfer of the threonylcarbamoyl moiety of threonylcarbamoyl-AMP (TC-AMP) to the N6 group of A37. The Kae1 domain likely plays a direct catalytic role in this reaction. The Bud32 domain probably displays kinase activity that regulates Kae1 function. The protein is Probable bifunctional tRNA threonylcarbamoyladenosine biosynthesis protein of Methanococcus maripaludis (strain C7 / ATCC BAA-1331).